Here is a 357-residue protein sequence, read N- to C-terminus: Outer membrane porin protein OmpD (357 aa).

The N-terminal stretch at 1 to 21 (MKLKLVAVAVTTLLAAGAVNA) is a signal peptide.

The protein belongs to the Gram-negative porin family. In terms of assembly, homotrimer.

It localises to the cell outer membrane. In terms of biological role, forms pores that allow passive diffusion of small molecules across the outer membrane. The chain is Outer membrane porin protein OmpD (ompD) from Citrobacter koseri (strain ATCC BAA-895 / CDC 4225-83 / SGSC4696).